Here is a 607-residue protein sequence, read N- to C-terminus: CRISPR-associated DNA-binding protein Cas12m (607 aa).

The tract at residues 1 to 16 (MTRVTVQTAGVHYKWQ) is wedge domain (WED-N). The segment at 17 to 189 (MPDQLTQQLR…QLRHHRWDGT (173 aa)) is recognition domain (REC). A roof in REC region spans residues 50 to 124 (WSSYPAVAAL…IASVRDEATE (75 aa)). Basic and acidic residues predominate over residues 74–83 (ASTVKEEKSR). Positions 74 to 94 (ASTVKEEKSRQRTKRPSHPAV) are disordered. A wedge domain (WED-C) region spans residues 190 to 315 (GTISVQLQRQ…KIPDQGEVDE (126 aa)). The ruvC-I stretch occupies residues 316-559 (GPTIAVHLGW…TVSHTGLSRV (244 aa)). The ruvC insertion stretch occupies residues 391–452 (SIRDTLVAWL…EGADIAETLE (62 aa)). The target nucleic-acid binding (TNB) stretch occupies residues 552 to 588 (SHTGLSRVHAACGHENPADDRYLMQPVLCDGCGRTYD). Zn(2+) contacts are provided by histidine 560, cysteine 563, cysteine 580, and cysteine 583. Positions 589-607 (TDLSATILMLQRASAATSN) are ruvC-II. Aspartate 590 is a Mg(2+) binding site.

The protein belongs to the CRISPR-associated DNA-binding protein Cas12m family. As to quaternary structure, binds crRNA and target dsDNA as a monomer. Requires Mg(2+) as cofactor. It depends on Zn(2+) as a cofactor.

In terms of biological role, CRISPR (clustered regularly interspaced short palindromic repeat), is an adaptive immune system that provides protection against mobile genetic elements (viruses, transposable elements and conjugative plasmids). CRISPR clusters contain sequences complementary to antecedent mobile elements and target invading nucleic acids. CRISPR clusters are transcribed and processed into CRISPR RNA (crRNA). Recognizes a short motif in the CRISPR repeat sequences (the 5' PAM or protospacer adjacent motif, 5'-TTN-3' in this organism) to help distinguish self versus nonself, as targets within the bacterial CRISPR locus do not have PAMs. Upon expression in E.coli as a CRISPR locus inhibits plasmid propagation when targeted to regions essential for plasmid propagation (replication origin and a selectable marker); inhibits expression of a non-selectable marker, probably at the transcriptional level. Protects E.coli against bacteriophage M13mp18, to a lesser extent against lambda and VpaE1 as well as phage T4 with hydroxymethyl or unmodified (but not glycosylated) cytosines. Preferentially binds to its associated crRNA. Cas12m-crRNA binds DNA in a PAM-dependent, crRNA-guided fashion. Binds a 20-bp crRNA-ss-target DNA heteroduplex, in a 52 nucleotide crRNA. No dsDNA, ssDNA or RNA nuclease activity is seen for the crRNA-Cas12m complex. Probably required for pre-crRNA processing to mature crRNA. This is CRISPR-associated DNA-binding protein Cas12m from Gordonia otitidis (strain DSM 44809 / CCUG 52243 / JCM 12355 / NBRC 100426 / IFM 10032).